We begin with the raw amino-acid sequence, 401 residues long: Phosphoglycerate kinase (401 aa).

Substrate contacts are provided by residues 21–23 (DLN), R36, 59–62 (HQGR), R116, and R156. ATP contacts are provided by residues E331 and 357-360 (GGDT).

It belongs to the phosphoglycerate kinase family.

Its subcellular location is the cytoplasm. It catalyses the reaction (2R)-3-phosphoglycerate + ATP = (2R)-3-phospho-glyceroyl phosphate + ADP. Its pathway is carbohydrate degradation; glycolysis; pyruvate from D-glyceraldehyde 3-phosphate: step 2/5. This Haloarcula vallismortis (Halobacterium vallismortis) protein is Phosphoglycerate kinase (pgk).